The primary structure comprises 58 residues: Enterocin-HF (58 aa).

The propeptide occupies 1–15; it reads MEKLTVKEMSQVVGG. Cys24 and Cys29 are oxidised to a cystine.

The protein resides in the secreted. Bacteriocin. This chain is Enterocin-HF (entHF), found in Enterococcus faecium (Streptococcus faecium).